The chain runs to 967 residues: Leucine--tRNA ligase (967 aa).

The 'HIGH' region motif lies at 43–53 (PYLSGHLHVGH). A 'KMSKS' region motif is present at residues 650-654 (KMSKS). Lysine 653 is an ATP binding site.

Belongs to the class-I aminoacyl-tRNA synthetase family.

The protein resides in the cytoplasm. The enzyme catalyses tRNA(Leu) + L-leucine + ATP = L-leucyl-tRNA(Leu) + AMP + diphosphate. The sequence is that of Leucine--tRNA ligase from Pyrococcus horikoshii (strain ATCC 700860 / DSM 12428 / JCM 9974 / NBRC 100139 / OT-3).